We begin with the raw amino-acid sequence, 53 residues long: Collagen alpha-1(I) chain (53 aa).

Residues 1–53 (SYGYBZKSAGVSVPGPMGPSGPRGLPGPPGAPGPZGFZGPPGZPGZPGSSGPM) form a disordered region. K7 carries the allysine modification. S8 carries the phosphoserine modification. The segment covering 10–23 (GVSVPGPMGPSGPR) has biased composition (low complexity). A 4-hydroxyproline mark is found at P26, P29, P32, P41, P44, and P47. Residues 34–53 (PZGFZGPPGZPGZPGSSGPM) show a composition bias toward low complexity.

It belongs to the fibrillar collagen family. Trimers of one alpha 2(I) and two alpha 1(I) chains. Interacts with MRC2. Interacts with TRAM2. Interacts with MFAP4 in a Ca (2+)-dependent manner. Contains mostly 4-hydroxyproline. Proline residues at the third position of the tripeptide repeating unit (G-X-Y) are hydroxylated in some or all of the chains. In terms of processing, contains 3-hydroxyproline at a few sites. This modification occurs on the first proline residue in the sequence motif Gly-Pro-Hyp, where Hyp is 4-hydroxyproline. Post-translationally, lysine residues at the third position of the tripeptide repeating unit (G-X-Y) are 5-hydroxylated in some or all of the chains. O-glycosylated on hydroxylated lysine residues. The O-linked glycan consists of a Glc-Gal disaccharide. In terms of tissue distribution, forms the fibrils of tendon, ligaments and bones. In bones the fibrils are mineralized with calcium hydroxyapatite.

The protein localises to the secreted. It is found in the extracellular space. Its subcellular location is the extracellular matrix. Functionally, type I collagen is a member of group I collagen (fibrillar forming collagen). This Oryctolagus cuniculus (Rabbit) protein is Collagen alpha-1(I) chain (COL1A1).